Consider the following 94-residue polypeptide: MKSFIVLAVTLCLAAFFMGQSVASPAAAAEESKFVDGLHALKTIEPELHGRYKRATCDLLSGTGINHSACAAHCLLRGNRGGYCNGKAVCVCRN.

Positions 1-23 are cleaved as a signal peptide; sequence MKSFIVLAVTLCLAAFFMGQSVA. Residues 24–54 constitute a propeptide that is removed on maturation; that stretch reads SPAAAAEESKFVDGLHALKTIEPELHGRYKR. 3 cysteine pairs are disulfide-bonded: Cys-57/Cys-84, Cys-70/Cys-90, and Cys-74/Cys-92.

The protein belongs to the invertebrate defensin family. Type 1 subfamily. In terms of tissue distribution, hemocytes and fat body.

It localises to the secreted. In terms of biological role, sapecins, which are potent bactericidal proteins, are produced in response to injury. Sapecin is cytotoxic to Gram-positive bacteria, and to a lesser extent against Gram-negative bacteria. The sequence is that of Sapecin from Sarcophaga peregrina (Flesh fly).